The primary structure comprises 169 residues: Crossover junction endodeoxyribonuclease RuvC (169 aa).

Residues aspartate 7, glutamate 67, and aspartate 140 contribute to the active site. Mg(2+) contacts are provided by aspartate 7, glutamate 67, and aspartate 140.

The protein belongs to the RuvC family. Homodimer which binds Holliday junction (HJ) DNA. The HJ becomes 2-fold symmetrical on binding to RuvC with unstacked arms; it has a different conformation from HJ DNA in complex with RuvA. In the full resolvosome a probable DNA-RuvA(4)-RuvB(12)-RuvC(2) complex forms which resolves the HJ. Mg(2+) serves as cofactor.

It localises to the cytoplasm. It carries out the reaction Endonucleolytic cleavage at a junction such as a reciprocal single-stranded crossover between two homologous DNA duplexes (Holliday junction).. Its function is as follows. The RuvA-RuvB-RuvC complex processes Holliday junction (HJ) DNA during genetic recombination and DNA repair. Endonuclease that resolves HJ intermediates. Cleaves cruciform DNA by making single-stranded nicks across the HJ at symmetrical positions within the homologous arms, yielding a 5'-phosphate and a 3'-hydroxyl group; requires a central core of homology in the junction. The consensus cleavage sequence is 5'-(A/T)TT(C/G)-3'. Cleavage occurs on the 3'-side of the TT dinucleotide at the point of strand exchange. HJ branch migration catalyzed by RuvA-RuvB allows RuvC to scan DNA until it finds its consensus sequence, where it cleaves and resolves the cruciform DNA. This Clostridioides difficile (strain 630) (Peptoclostridium difficile) protein is Crossover junction endodeoxyribonuclease RuvC.